The chain runs to 1355 residues: Probable aldehyde oxidase 2 (1355 aa).

In terms of domain architecture, 2Fe-2S ferredoxin-type spans 9–96; it reads RPVVVTVNGE…HCAVTTSEGI (88 aa). [2Fe-2S] cluster-binding residues include cysteine 48, cysteine 53, cysteine 56, and cysteine 78. In terms of domain architecture, FAD-binding PCMH-type spans 244–422; sequence VAVTGDGWFH…VSISIPDWGS (179 aa). The tract at residues 544-577 is disordered; that stretch reads PENANVPNGSCTNGTANGSANSSPEKHSNVDSSD. Polar residues predominate over residues 548 to 566; that stretch reads NVPNGSCTNGTANGSANSS.

This sequence belongs to the xanthine dehydrogenase family. In terms of assembly, aldehyde oxidases (AO) are homodimers and heterodimers of AO subunits. [2Fe-2S] cluster serves as cofactor. Requires FAD as cofactor. The cofactor is Mo-molybdopterin.

The enzyme catalyses an aldehyde + O2 + H2O = a carboxylate + H2O2 + H(+). The sequence is that of Probable aldehyde oxidase 2 from Oryza sativa subsp. japonica (Rice).